Reading from the N-terminus, the 332-residue chain is Succinylglutamate desuccinylase (332 aa).

H59, E62, and H151 together coordinate Zn(2+). E215 is an active-site residue.

The protein belongs to the AspA/AstE family. Succinylglutamate desuccinylase subfamily. Zn(2+) serves as cofactor.

The catalysed reaction is N-succinyl-L-glutamate + H2O = L-glutamate + succinate. It functions in the pathway amino-acid degradation; L-arginine degradation via AST pathway; L-glutamate and succinate from L-arginine: step 5/5. Its function is as follows. Transforms N(2)-succinylglutamate into succinate and glutamate. This chain is Succinylglutamate desuccinylase, found in Pseudomonas aeruginosa (strain UCBPP-PA14).